Reading from the N-terminus, the 263-residue chain is MKQLMMIGFGAMASEVYAHLPQDLELKWIVVPERSVESVKQKVDRHIQVISDINQCDGAPDYVIEVAGQAAVKEHAKNVLAHGWNIGLISVGTLADSEFFTELQQTAEQNGAHLHLLAGAIAGIDGIAAAKEGGLEKVTYKGCKSPNSWRGSYAEQLIDLDQVHTVTMFYRGTAREAAQKFPANANVAATIALAGVGMDNTIVELTVDPDTTQNKHTIVAEGRFGQMTIEMVGVPLASNPKTSTLAALSVIRACRNSVEAIQI.

Residues Ala-120 and Asn-186 each coordinate NAD(+). Residue His-216 is part of the active site.

The protein belongs to the L-aspartate dehydrogenase family.

The enzyme catalyses L-aspartate + NADP(+) + H2O = oxaloacetate + NH4(+) + NADPH + H(+). The catalysed reaction is L-aspartate + NAD(+) + H2O = oxaloacetate + NH4(+) + NADH + H(+). It participates in cofactor biosynthesis; NAD(+) biosynthesis; iminoaspartate from L-aspartate (dehydrogenase route): step 1/1. In terms of biological role, specifically catalyzes the NAD or NADP-dependent dehydrogenation of L-aspartate to iminoaspartate. The sequence is that of L-aspartate dehydrogenase from Acinetobacter baylyi (strain ATCC 33305 / BD413 / ADP1).